The sequence spans 311 residues: Pyrimidine-specific ribonucleoside hydrolase RihA (311 aa).

H240 is an active-site residue.

This sequence belongs to the IUNH family. RihA subfamily.

Its function is as follows. Hydrolyzes with equal efficiency cytidine or uridine to ribose and cytosine or uracil, respectively. The chain is Pyrimidine-specific ribonucleoside hydrolase RihA from Escherichia coli O127:H6 (strain E2348/69 / EPEC).